A 209-amino-acid chain; its full sequence is Uridine kinase (209 aa).

An ATP-binding site is contributed by 16–23; sequence GGSGSGKT.

The protein belongs to the uridine kinase family.

It localises to the cytoplasm. The catalysed reaction is uridine + ATP = UMP + ADP + H(+). It catalyses the reaction cytidine + ATP = CMP + ADP + H(+). It functions in the pathway pyrimidine metabolism; CTP biosynthesis via salvage pathway; CTP from cytidine: step 1/3. Its pathway is pyrimidine metabolism; UMP biosynthesis via salvage pathway; UMP from uridine: step 1/1. The chain is Uridine kinase from Lactiplantibacillus plantarum (strain ATCC BAA-793 / NCIMB 8826 / WCFS1) (Lactobacillus plantarum).